A 420-amino-acid chain; its full sequence is Argininosuccinate synthase (420 aa).

Position 11 to 19 (11 to 19) interacts with ATP; that stretch reads AFSGGLDTT. Tyr-88 contributes to the L-citrulline binding site. Gly-118 serves as a coordination point for ATP. L-aspartate is bound by residues Thr-120, Asn-124, and Asp-125. Asn-124 is an L-citrulline binding site. L-citrulline contacts are provided by Arg-128, Ser-174, Ser-183, Glu-257, and Tyr-269. The disordered stretch occupies residues 401–420; the sequence is KGAAVTDGSGDHAASEDTEE. Positions 409-420 are enriched in basic and acidic residues; the sequence is SGDHAASEDTEE.

It belongs to the argininosuccinate synthase family. Type 1 subfamily. Homotetramer.

Its subcellular location is the cytoplasm. The enzyme catalyses L-citrulline + L-aspartate + ATP = 2-(N(omega)-L-arginino)succinate + AMP + diphosphate + H(+). It participates in amino-acid biosynthesis; L-arginine biosynthesis; L-arginine from L-ornithine and carbamoyl phosphate: step 2/3. The sequence is that of Argininosuccinate synthase from Haloarcula marismortui (strain ATCC 43049 / DSM 3752 / JCM 8966 / VKM B-1809) (Halobacterium marismortui).